The primary structure comprises 1049 residues: Solvent-resistant pump membrane transporter SrpB (1049 aa).

The next 12 helical transmembrane spans lie at 10 to 30, 339 to 359, 366 to 386, 392 to 412, 440 to 460, 470 to 490, 542 to 562, 871 to 891, 895 to 915, 927 to 947, 973 to 993, and 1008 to 1028; these read IFAW…LAKM, SVVH…YLFL, LIPT…LPYF, VLTM…AIVV, GALV…AFFG, FAIT…VFTP, LAFL…PKAF, APLL…ALYE, VPVS…LATL, VGLM…VEFA, ILMT…ASGA, and GMIT…VVVV.

This sequence belongs to the resistance-nodulation-cell division (RND) (TC 2.A.6) family.

Its subcellular location is the cell inner membrane. Functionally, the inner membrane transporter component of an organic solvent efflux pump. Involved in export of a number of low log POW compounds including hexane (log POW 3.5), toluene (log POW 2.5) and dimethylphthalate (log POW 2.3). The solvent resistance phenotype has been postulated to depend on the operon expression level. The chain is Solvent-resistant pump membrane transporter SrpB (srpB) from Pseudomonas putida (Arthrobacter siderocapsulatus).